We begin with the raw amino-acid sequence, 276 residues long: Hydroxyethylthiazole kinase (276 aa).

Residues Met53 and Ala202 each coordinate substrate.

The protein belongs to the Thz kinase family. The cofactor is Mg(2+).

The catalysed reaction is 5-(2-hydroxyethyl)-4-methylthiazole + ATP = 4-methyl-5-(2-phosphooxyethyl)-thiazole + ADP + H(+). It functions in the pathway cofactor biosynthesis; thiamine diphosphate biosynthesis; 4-methyl-5-(2-phosphoethyl)-thiazole from 5-(2-hydroxyethyl)-4-methylthiazole: step 1/1. Its function is as follows. Thiazole kinase involved in thiamine salvage pathway. The sequence is that of Hydroxyethylthiazole kinase (THIM) from Arabidopsis thaliana (Mouse-ear cress).